Consider the following 1458-residue polypeptide: DNA polymerase alpha catalytic subunit (1458 aa).

2 disordered regions span residues 1 to 25 and 89 to 119; these read MSDS…RKEA and DLED…SVSK. A compositionally biased stretch (basic and acidic residues) spans 15–25; that stretch reads EKTEKSGRKEA. 2 DNA-binding regions span residues 650-715 and 1241-1373; these read RINS…VHQI and QFRA…ACSK. Positions 1280, 1283, 1307, 1312, 1345, 1350, 1368, and 1371 each coordinate Zn(2+). The segment at 1280–1310 adopts a CysA-type zinc-finger fold; it reads CPKCGTENIYDNVFDGSGLQIEPGLKRCSKP. The CysB motif signature appears at 1345–1371; sequence CEEKTCQNRTRRLPLSFSRNGPICQAC.

This sequence belongs to the DNA polymerase type-B family. In terms of assembly, the DNA polymerase alpha complex is composed of four subunits: the catalytic subunit POLA1, the regulatory subunit POLA2, and the small and the large primase subunits PRIM1 and PRIM2 respectively. Interacts with PARP1; this interaction functions as part of the control of replication fork progression. Interacts with MCM10 and WDHD1; these interactions recruit the polymerase alpha complex to the pre-replicative complex bound to DNA. Interacts with RPA1; this interaction stabilizes the replicative complex and reduces the misincorporation rate of DNA polymerase alpha by acting as a fidelity clamp.

It localises to the nucleus. It carries out the reaction DNA(n) + a 2'-deoxyribonucleoside 5'-triphosphate = DNA(n+1) + diphosphate. Its function is as follows. Plays an essential role in the initiation of DNA replication. During the S phase of the cell cycle, the DNA polymerase alpha complex (composed of a catalytic subunit POLA1/p180, a regulatory subunit POLA2/p70 and two primase subunits PRIM1/p49 and PRIM2/p58) is recruited to DNA at the replicative forks via direct interactions with MCM10 and WDHD1. The primase subunit of the polymerase alpha complex initiates DNA synthesis by oligomerising short RNA primers on both leading and lagging strands. These primers are initially extended by the polymerase alpha catalytic subunit and subsequently transferred to polymerase delta and polymerase epsilon for processive synthesis on the lagging and leading strand, respectively. The reason this transfer occurs is because the polymerase alpha has limited processivity and lacks intrinsic 3' exonuclease activity for proofreading error, and therefore is not well suited for replicating long complexes. The protein is DNA polymerase alpha catalytic subunit (pola1) of Xenopus laevis (African clawed frog).